We begin with the raw amino-acid sequence, 418 residues long: N-acetylglucosamine-6-phosphate deacetylase (418 aa).

A divalent metal cation is bound at residue E154. C165–H166 provides a ligand contact to substrate. Residues H223 and H244 each contribute to the a divalent metal cation site. Substrate is bound by residues N247–A248, R255, and D281–H284. D306 acts as the Proton donor/acceptor in catalysis. T340–G342 serves as a coordination point for substrate.

The protein belongs to the metallo-dependent hydrolases superfamily. NagA family. A divalent metal cation serves as cofactor.

The catalysed reaction is N-acetyl-D-glucosamine 6-phosphate + H2O = D-glucosamine 6-phosphate + acetate. The chain is N-acetylglucosamine-6-phosphate deacetylase from Caenorhabditis elegans.